Consider the following 312-residue polypeptide: Malate dehydrogenase (312 aa).

Residues 12–17 (GAGFTG) and Asp-36 contribute to the NAD(+) site. Positions 87 and 93 each coordinate substrate. NAD(+) contacts are provided by residues Asn-100 and 123 to 125 (LTN). Asn-125 contributes to the substrate binding site. Phosphoserine is present on Ser-149. A substrate-binding site is contributed by Arg-156. The Proton acceptor role is filled by His-180.

Belongs to the LDH/MDH superfamily. MDH type 3 family.

It carries out the reaction (S)-malate + NAD(+) = oxaloacetate + NADH + H(+). Its function is as follows. Catalyzes the reversible oxidation of malate to oxaloacetate. The protein is Malate dehydrogenase (mdh) of Bacillus subtilis (strain 168).